Reading from the N-terminus, the 1186-residue chain is Pumilio homolog 1 (1186 aa).

Ser2 carries the N-acetylserine modification. Phosphoserine is present on Ser19. Residues Leu22 to Gly73 are disordered. Residues Gln45 to Ala58 are compositionally biased toward low complexity. Ser75, Ser98, and Ser106 each carry phosphoserine. Thr112 bears the Phosphothreonine mark. Phosphoserine is present on residues Ser124, Ser159, Ser197, Ser209, and Ser229. A disordered region spans residues Ser233–Glu272. The segment covering Asn250–Glu272 has biased composition (basic and acidic residues). Phosphoserine is present on Ser305. A compositionally biased stretch (low complexity) spans Thr485 to Gln502. Disordered regions lie at residues Thr485–Thr524 and Ala613–Asn648. Over residues Arg511 to Thr524 the composition is skewed to polar residues. A Phosphothreonine modification is found at Thr514. A compositionally biased stretch (low complexity) spans Gln626–Asn639. Ser709 and Ser714 each carry phosphoserine. The interval Gly742–Gly775 is disordered. Low complexity predominate over residues Leu763 to Gly775. Residue Arg796 is modified to Omega-N-methylarginine. Residues Ser806 and Ser822 each carry the phosphoserine modification. Residues Gly828–Tyr1168 form the PUM-HD domain. Pumilio repeat units follow at residues Glu848–Asn883, Glu884–Glu919, Arg920–Arg955, Glu956–Asp991, Ala992–Glu1027, Glu1028–Ala1063, Glu1064–Asp1099, and Thr1103–His1142. Residues Ser863–Gln867 form an adenine-nucleotide binding in RNA target region. Positions Asn899–Gln903 are uracil-nucleotide binding in RNA target. Positions Cys935–Gln939 are adenine-nucleotide binding in RNA target. Residues Asn971–Gln975 form a non-specific-nucleotide binding in RNA target region. Residues Cys1007–Gln1011 are adenine-nucleotide binding in RNA target. The uracil-nucleotide binding in RNA target stretch occupies residues Asn1043 to Gln1047. Guanine-nucleotide binding in RNA target stretches follow at residues Ser1079–Glu1083 and Asn1080–Glu1083. The uracil-nucleotide binding in RNA target stretch occupies residues Asn1122 to Gln1126.

Recruits the CCR4-POP2-NOT deadenylase leading to translational inhibition and mRNA degradation. Interacts with TRIM71 (via NHL repeats) in an RNA-dependent manner. Phosphorylation at Ser-714 promotes RNA-binding activity. Following growth factor stimulation phosphorylated at Ser-714, promoting binding to the 3'-UTR of CDKN1B/p27 mRNA.

It is found in the cytoplasm. It localises to the P-body. The protein resides in the cytoplasmic granule. In terms of biological role, sequence-specific RNA-binding protein that acts as a post-transcriptional repressor by binding the 3'-UTR of mRNA targets. Binds to an RNA consensus sequence, the Pumilio Response Element (PRE), 5'-UGUANAUA-3', that is related to the Nanos Response Element (NRE). Mediates post-transcriptional repression of transcripts via different mechanisms: acts via direct recruitment of the CCR4-POP2-NOT deadenylase leading to translational inhibition and mRNA degradation. Also mediates deadenylation-independent repression by promoting accessibility of miRNAs. Following growth factor stimulation, phosphorylated and binds to the 3'-UTR of CDKN1B/p27 mRNA, inducing a local conformational change that exposes miRNA-binding sites, promoting association of miR-221 and miR-222, efficient suppression of CDKN1B/p27 expression, and rapid entry to the cell cycle. Acts as a post-transcriptional repressor of E2F3 mRNAs by binding to its 3'-UTR and facilitating miRNA regulation. Represses a program of genes necessary to maintain genomic stability such as key mitotic, DNA repair and DNA replication factors. Its ability to repress those target mRNAs is regulated by the lncRNA NORAD (non-coding RNA activated by DNA damage) which, due to its high abundance and multitude of PUMILIO binding sites, is able to sequester a significant fraction of PUM1 and PUM2 in the cytoplasm. Involved in neuronal functions by regulating ATXN1 mRNA levels: acts by binding to the 3'-UTR of ATXN1 transcripts, leading to their down-regulation independently of the miRNA machinery. Plays a role in cytoplasmic sensing of viral infection. In testis, acts as a post-transcriptional regulator of spermatogenesis by binding to the 3'-UTR of mRNAs coding for regulators of p53/TP53. Involved in embryonic stem cell renewal by facilitating the exit from the ground state: acts by targeting mRNAs coding for naive pluripotency transcription factors and accelerates their down-regulation at the onset of differentiation. Binds specifically to miRNA MIR199A precursor, with PUM2, regulates miRNA MIR199A expression at a postranscriptional level. The chain is Pumilio homolog 1 (PUM1) from Pongo abelii (Sumatran orangutan).